Consider the following 342-residue polypeptide: N-acetyl-gamma-glutamyl-phosphate reductase (342 aa).

Residue Cys-149 is part of the active site.

Belongs to the NAGSA dehydrogenase family. Type 1 subfamily.

It is found in the cytoplasm. It carries out the reaction N-acetyl-L-glutamate 5-semialdehyde + phosphate + NADP(+) = N-acetyl-L-glutamyl 5-phosphate + NADPH + H(+). It participates in amino-acid biosynthesis; L-arginine biosynthesis; N(2)-acetyl-L-ornithine from L-glutamate: step 3/4. In terms of biological role, catalyzes the NADPH-dependent reduction of N-acetyl-5-glutamyl phosphate to yield N-acetyl-L-glutamate 5-semialdehyde. The sequence is that of N-acetyl-gamma-glutamyl-phosphate reductase from Cereibacter sphaeroides (strain ATCC 17023 / DSM 158 / JCM 6121 / CCUG 31486 / LMG 2827 / NBRC 12203 / NCIMB 8253 / ATH 2.4.1.) (Rhodobacter sphaeroides).